The chain runs to 248 residues: Putative TrmH family tRNA/rRNA methyltransferase (248 aa).

Residues Gly196, Ile216, and Leu225 each contribute to the S-adenosyl-L-methionine site.

This sequence belongs to the class IV-like SAM-binding methyltransferase superfamily. RNA methyltransferase TrmH family.

The chain is Putative TrmH family tRNA/rRNA methyltransferase from Staphylococcus aureus (strain COL).